The sequence spans 233 residues: Membrane glycoprotein UL9 (233 aa).

The N-terminal stretch at 1 to 20 (MSKRLQVFPWITILFYTSKS) is a signal peptide. Asn40, Asn94, Asn101, Asn131, and Asn169 each carry an N-linked (GlcNAc...) asparagine; by host glycan. A helical membrane pass occupies residues 194-214 (MWIIPLVIVITIIVLICFKFP).

Belongs to the HHV-5 UL9 family.

It is found in the host membrane. The protein is Membrane glycoprotein UL9 (UL9) of Homo sapiens (Human).